A 149-amino-acid chain; its full sequence is Nucleoside deoxyribosyltransferase (149 aa).

Glutamate 90 acts as the Nucleophile in catalysis.

Belongs to the nucleoside deoxyribosyltransferase family.

The catalysed reaction is 2-deoxy-D-ribosyl-base(1) + base(2) = 2-deoxy-D-ribosyl-base(2) + base(1).. It functions in the pathway nucleotide metabolism; nucleotide salvage pathway. In terms of biological role, catalyzes the cleavage of the glycosidic bond of 2'-deoxyribonucleosides and the transfer of the deoxyribosyl moiety to an acceptor purine or pyrimidine base. The polypeptide is Nucleoside deoxyribosyltransferase (ntd) (Lactobacillus johnsonii (strain CNCM I-12250 / La1 / NCC 533)).